Here is a 148-residue protein sequence, read N- to C-terminus: MFRGATSLNMDAKGRLAVPAKHRDALHAQSEGNLVLTAHPHRCLLLYPLPAWEPIQSKIMALSSFDRQSSALQRLLVGFAEDVELDGAGRLLVSPVLREFAGFEKQVMLVGQGSHFELWSMEAWRAQLQQVMSAESVELPDELEGFSL.

2 consecutive SpoVT-AbrB domains span residues 5–51 (ATSL…PLPA) and 80–123 (AEDV…SMEA).

It belongs to the MraZ family. As to quaternary structure, forms oligomers.

The protein resides in the cytoplasm. The protein localises to the nucleoid. The protein is Transcriptional regulator MraZ of Methylobacillus flagellatus (strain ATCC 51484 / DSM 6875 / VKM B-1610 / KT).